The following is a 693-amino-acid chain: TGF-beta-activated kinase 1 and MAP3K7-binding protein 2 (693 aa).

A CUE domain is found at 8 to 51 (IDFQVLHDLRQKFPEVPEVVVSRCMLQNNNNLDACCAVLSQEST). A disordered region spans residues 90–171 (HGREGSRVNG…KGTSNLSQQT (82 aa)). Polar residues-rich tracts occupy residues 97 to 130 (VNGSRTLTHSVSDGQLHGGQSNNELFQQEPQTAP), 143 to 153 (PSTSGASNSTP), and 162 to 171 (KGTSNLSQQT). Arg-173 bears the Asymmetric dimethylarginine mark. The segment covering 223 to 282 (SGTARQTQQHSGWVSQFNPMNPQQAYQPSQPGPWTTYPASNPLPHTSTQQPNQQGHQTSH) has biased composition (polar residues). Positions 223 to 310 (SGTARQTQQH…SGSSQSSAHS (88 aa)) are disordered. A compositionally biased stretch (low complexity) spans 286–310 (PISSPTTPQPPTIHSSGSSQSSAHS). A Glycyl lysine isopeptide (Lys-Gly) (interchain with G-Cter in SUMO) cross-link involves residue Lys-329. The interval 330–380 (LEPPQRNSSSKLRSSGPRTASTSSLVNSQTLNRNQPTVYIAASPPNTDEMI) is disordered. Over residues 334-366 (QRNSSSKLRSSGPRTASTSSLVNSQTLNRNQPT) the composition is skewed to polar residues. Ser-372, Ser-450, Ser-482, and Ser-524 each carry phosphoserine. Positions 532–619 (YTQALLVHQK…TKEIDLFQAR (88 aa)) form a coiled coil. Residue Lys-562 forms a Glycyl lysine isopeptide (Lys-Gly) (interchain with G-Cter in SUMO) linkage. Residue Ser-582 is modified to Phosphoserine. Lys-611 is covalently cross-linked (Glycyl lysine isopeptide (Lys-Gly) (interchain with G-Cter in ubiquitin)). Residues 640-663 (PVPPKPKDQRSTIKAPKTQDAEDE) are disordered. The RanBP2-type zinc-finger motif lies at 663–693 (EEGAQWNCTACTFLNHPALIRCEQCEMPRHF). The interval 675 to 685 (FLNHPALIRCE) is interaction with polyubiquitin.

Interacts with MAP3K7 and TRAF6. Identified in the TRIKA2 complex composed of MAP3K7, TAB1 and TAB2. Binds 'Lys-63'-linked polyubiquitin chains. Interacts with NCOR1 and HDAC3 to form a ternary complex. Interacts (via C-terminal) with NUMBL (via PTB domain). Interacts (via the C-terminus) with DYNC2I2 (via WD domains). Interacts with RBCK1. Interacts with TRIM5. Interacts with TRIM38 (via B30.2/SPRY domain), leading to its translocation to lysosomes and degradation. Interacts with ASB1; this interaction promotes TAB2 stability. Post-translationally, SUMOylated by TRIM60; leading to inhibition of MAPK/NF-kappaB activation and the innate immune response. In terms of processing, ubiquitinated; following IL1 stimulation or TRAF6 overexpression. Ubiquitination involves RBCK1 leading to proteasomal degradation. Ubiquitinated at Lys-611 by TRIM45 leading to proteasomal degradation. Degraded in a lysosome-dependent manner following interaction with TRIM38. Post-translationally, phosphorylated. Widely expressed.

Its subcellular location is the membrane. The protein resides in the endosome membrane. The protein localises to the lysosome membrane. It localises to the cytoplasm. It is found in the cytosol. Its subcellular location is the nucleus. Adapter required to activate the JNK and NF-kappa-B signaling pathways through the specific recognition of 'Lys-63'-linked polyubiquitin chains by its RanBP2-type zinc finger (NZF). Acts as an adapter linking MAP3K7/TAK1 and TRAF6 to 'Lys-63'-linked polyubiquitin chains. The RanBP2-type zinc finger (NZF) specifically recognizes Lys-63'-linked polyubiquitin chains unanchored or anchored to the substrate proteins such as RIPK1/RIP1 and RIPK2: this acts as a scaffold to organize a large signaling complex to promote autophosphorylation of MAP3K7/TAK1, and subsequent activation of I-kappa-B-kinase (IKK) core complex by MAP3K7/TAK1. Also recognizes and binds Lys-63'-linked polyubiquitin chains of heterotypic 'Lys-63'-/'Lys-48'-linked branched ubiquitin chains. Regulates the IL1-mediated translocation of NCOR1 out of the nucleus. Involved in heart development. In Mus musculus (Mouse), this protein is TGF-beta-activated kinase 1 and MAP3K7-binding protein 2 (Tab2).